The sequence spans 349 residues: tRNA pseudouridine synthase D (349 aa).

Phe27 provides a ligand contact to substrate. The active-site Nucleophile is the Asp80. Asn129 contributes to the substrate binding site. The region spanning 155–303 (GVPNYFGAQR…VEAARRAMLL (149 aa)) is the TRUD domain. Phe329 lines the substrate pocket.

Belongs to the pseudouridine synthase TruD family.

The catalysed reaction is uridine(13) in tRNA = pseudouridine(13) in tRNA. Functionally, responsible for synthesis of pseudouridine from uracil-13 in transfer RNAs. The sequence is that of tRNA pseudouridine synthase D from Shigella boydii serotype 4 (strain Sb227).